The sequence spans 103 residues: Histone H4 (103 aa).

The segment covering M1–G14 has biased composition (gly residues). Residues M1–R20 form a disordered region. Residues K17 to K21 mediate DNA binding.

The protein belongs to the histone H4 family. The nucleosome is a histone octamer containing two molecules each of H2A, H2B, H3 and H4 assembled in one H3-H4 heterotetramer and two H2A-H2B heterodimers. The octamer wraps approximately 147 bp of DNA.

The protein localises to the nucleus. It is found in the chromosome. Core component of nucleosome. Nucleosomes wrap and compact DNA into chromatin, limiting DNA accessibility to the cellular machineries which require DNA as a template. Histones thereby play a central role in transcription regulation, DNA repair, DNA replication and chromosomal stability. DNA accessibility is regulated via a complex set of post-translational modifications of histones, also called histone code, and nucleosome remodeling. In Chlamydomonas reinhardtii (Chlamydomonas smithii), this protein is Histone H4 (H4-I).